We begin with the raw amino-acid sequence, 664 residues long: Prelamin-A/C (664 aa).

M1 carries the N-acetylmethionine modification. Residues 1–25 (METPSQRRATRSGAQASSTPLSPTR) are disordered. A head region spans residues 1 to 33 (METPSQRRATRSGAQASSTPLSPTRITRLQEKE). The interaction with MLIP stretch occupies residues 1 to 130 (METPSQRRAT…TKKEGDLIAA (130 aa)). A Phosphothreonine modification is found at T3. Phosphoserine is present on S5. T10 carries the post-translational modification Phosphothreonine. Residues S12 and S18 each carry the phosphoserine modification. The residue at position 19 (T19) is a Phosphothreonine. Residue S22 is modified to Phosphoserine; by CDK1. Residues 31–387 (EKEDLQELND…KLLEGEEERL (357 aa)) enclose the IF rod domain. K32 is modified (N6-acetyllysine; alternate). At K32 the chain carries N6-succinyllysine; alternate. Residue K32 forms a Glycyl lysine isopeptide (Lys-Gly) (interchain with G-Cter in SUMO2); alternate linkage. A coil 1A region spans residues 34 to 70 (DLQELNDRLAVYIDRVRSLETENAGLRLRITESEEVV). A phosphoserine mark is found at S51, S66, and S71. The segment at 71 to 80 (SREVSGIKAA) is linker 1. Residues K78 and K97 each carry the N6-acetyllysine modification. The segment at 81–218 (YEAELGDARK…NIYSEELRET (138 aa)) is coil 1B. K97 participates in a covalent cross-link: Glycyl lysine isopeptide (Lys-Gly) (interchain with G-Cter in SUMO2). At S107 the chain carries Phosphoserine. 6 positions are modified to N6-acetyllysine: K108, K114, K123, K135, K144, and K155. N6-acetyllysine; alternate is present on K171. At K171 the chain carries N6-succinyllysine; alternate. K171 is covalently cross-linked (Glycyl lysine isopeptide (Lys-Gly) (interchain with G-Cter in SUMO2); alternate). An N6-acetyllysine mark is found at K180, K201, and K208. Residue K201 forms a Glycyl lysine isopeptide (Lys-Gly) (interchain with G-Cter in SUMO2); alternate linkage. K201 participates in a covalent cross-link: Glycyl lysine isopeptide (Lys-Gly) (interchain with G-Cter in SUMO); alternate. A Glycyl lysine isopeptide (Lys-Gly) (interchain with G-Cter in SUMO2) cross-link involves residue K208. Position 212 is a phosphoserine (S212). Residues K219 and K233 each participate in a glycyl lysine isopeptide (Lys-Gly) (interchain with G-Cter in SUMO2) cross-link. Residues 219–242 (KRRHETRLVEIDNGKQREFESRLA) form a linker 2 region. 4 positions are modified to N6-acetyllysine: K233, K260, K265, and K270. A coil 2 region spans residues 243–383 (DALQELRAQH…HAYRKLLEGE (141 aa)). The interval 259 to 331 (YKKELEKTYS…DLEDSLARER (73 aa)) is necessary and sufficient for the interaction with IFFO1. K260 is covalently cross-linked (Glycyl lysine isopeptide (Lys-Gly) (interchain with G-Cter in SUMO2); alternate). A Glycyl lysine isopeptide (Lys-Gly) (interchain with G-Cter in SUMO2); alternate cross-link involves residue K270. S277 carries the post-translational modification Phosphoserine. S282 carries the phosphoserine; by ATR modification. A phosphoserine mark is found at S301 and S307. Residue K311 forms a Glycyl lysine isopeptide (Lys-Gly) (interchain with G-Cter in SUMO2); alternate linkage. K311, K316, and K341 each carry N6-acetyllysine. Residues K366 and K378 each participate in a glycyl lysine isopeptide (Lys-Gly) (interchain with G-Cter in SUMO2) cross-link. Residues 384–442 (EERLRLSPSPTSQRSRGRASSHSSQTQGGGSVTKKRKLESTESRSSFSQHARTSGRVAV) are disordered. The tract at residues 384–664 (EERLRLSPSP…TQSPQNCSIM (281 aa)) is tail. The residue at position 390 (S390) is a Phosphoserine. At S392 the chain carries Phosphoserine; by CDK1. Phosphoserine; by ATR is present on S395. Residues S398, S403, S404, S406, S407, and S414 each carry the phosphoserine modification. The residue at position 416 (T416) is a Phosphothreonine. Residue K417 is modified to N6-acetyllysine. Residues K417 and K420 each participate in a glycyl lysine isopeptide (Lys-Gly) (interchain with G-Cter in SUMO2) cross-link. The Nuclear localization signal motif lies at 417 to 422 (KKRKLE). 4 positions are modified to phosphoserine: S423, S426, S429, and S431. Positions 426 to 435 (SRSSFSQHAR) are enriched in polar residues. The LTD domain occupies 428–545 (SSFSQHARTS…EEVAMRKLVR (118 aa)). Residue K450 forms a Glycyl lysine isopeptide (Lys-Gly) (interchain with G-Cter in SUMO2); alternate linkage. An N6-acetyllysine mark is found at K450 and K457. Residues S458 and S463 each carry the phosphoserine modification. Glycyl lysine isopeptide (Lys-Gly) (interchain with G-Cter in SUMO2) cross-links involve residues K470 and K486. N6-acetyllysine is present on K486. Phosphothreonine occurs at positions 496, 505, and 510. S533 and S546 each carry phosphoserine. The residue at position 548 (T548) is a Phosphothreonine. Positions 552-576 (DDEDEDGDDLLHHHHGSHCSSSGDP) are disordered. S568 and S571 each carry phosphoserine. K597 participates in a covalent cross-link: Glycyl lysine isopeptide (Lys-Gly) (interchain with G-Cter in SUMO2); alternate. K597 participates in a covalent cross-link: Glycyl lysine isopeptide (Lys-Gly) (interchain with G-Cter in SUMO1); alternate. Residues 598 to 619 (ASASGSGAQVGGPISSGSSASS) form a disordered region. S612, S613, S616, and S619 each carry phosphoserine. S625 and S628 each carry an O-linked (GlcNAc) serine glycan. Phosphoserine is present on residues S628, S632, S636, and S652. The propeptide at 647 to 661 (LLGNSSPRTQSPQNC) is removed in Lamin-A/C form. C661 is modified (cysteine methyl ester). Residue C661 is the site of S-farnesyl cysteine attachment. Residues 662-664 (SIM) constitute a propeptide, removed in Prelamin-A/C form and in Lamin-A/C form.

Belongs to the intermediate filament family. In terms of assembly, homodimer of lamin A and lamin C. Lamin dimers then assemble into dimeric head-to-tail polymers. Ultimately, two head-to-tail polymers assemble laterally into a protofilament with a uniformly shaped rod of 3.5 nm in diameter. Interacts with lamin-associated polypeptides IA, IB and TMPO-alpha, RB1 and with emerin. Interacts with SREBF1, SREBF2, SUN2 and TMEM43. Interacts with TMEM201. Proteolytically processed isoform A interacts with NARF. Interacts with SUN1. Interacts with MLIP. Interacts with DMPK; may regulate nuclear envelope stability. Interacts with SUV39H1; the interaction increases stability of SUV39H1. Interacts with SYNE2. Interacts with ITSN1 isoform 2. Interacts with IFFO1; enables the formation of an interior nucleoskeleton that is recruited to DNA double-strand breaks. Interacts with EMD. As to quaternary structure, interacts (via C-terminus) with LEMD2 (via N-terminus) (in vitro). Proteolytic cleavage of the C-terminal of 18 residues of prelamin-A/C results in the production of lamin-A/C. The prelamin-A/C maturation pathway includes farnesylation of CAAX motif by protein farnesyltransferase (FNTA and FNTB), removal of the last three amino acids (-AAX) by RCE1/FACE2 and/or ZMPSTE24, methylation of the C-terminal cysteine by ICMT and endoproteolytic removal of the last 15 C-terminal amino acids by ZMPSTE24. Proteolytic cleavage requires prior farnesylation and methylation, and absence of these blocks cleavage. Post-translationally, farnesylation of prelamin-A/C facilitates nuclear envelope targeting. In terms of processing, phosphorylation plays a key role in lamin organization, subcellular localization and nuclear envelope disintegration. Phosphorylation by CDK1 at Ser-22 and Ser-392 at the onset of mitosis drives lamin disassembly and nuclear envelope breakdown. Phosphorylation at Ser-22 and Ser-392 during interphase promotes localization to the nucleoplasm and regulates lamina assembly. Phosphorylation at Ser-22, Ser-392 and Ser-628 during interphase causes redistribution between the nucleus and the cytoplasm. Phosphorylation at Ser-22 by CDK1 regulates matrix stiffness. Phosphorylation status of Ser-22 determines its localization between double-strand break (DSB) sites and the nuclear matrix. Phosphorylated by ATR at Ser-282 in response to DNA damage, leading to lamin disassembly and nuclear envelope rupture. Phosphorylation also regulates stability in micronuclei arising from genome instability: phosphorylation at Ser-395 by ATR in response to genome instability and double-stranded DNA breaks primes LMNA for subsequent phosphorylation at Ser-392 by CDK1 and micronuclei envelope rupture. The rupture of micronuclear envelope triggers the cGAS-STING pathway thereby activating the type I interferon response and innate immunity. Acetylation by KAT8 is required for nuclear architecture. Post-translationally, sumoylation is necessary for the localization to the nuclear envelope. In the arteries, prelamin-A/C accumulation is not observed in young healthy vessels but is prevalent in medial vascular smooth muscle cells (VSMCs) from aged individuals and in atherosclerotic lesions, where it often colocalizes with senescent and degenerate VSMCs. Prelamin-A/C expression increases with age and disease. In normal aging, the accumulation of prelamin-A/C is caused in part by the down-regulation of ZMPSTE24/FACE1 in response to oxidative stress.

It is found in the nucleus lamina. Its subcellular location is the nucleus envelope. It localises to the nucleus. The protein resides in the nucleoplasm. The protein localises to the nucleus matrix. It is found in the nucleus speckle. In terms of biological role, lamins are intermediate filament proteins that assemble into a filamentous meshwork, and which constitute the major components of the nuclear lamina, a fibrous layer on the nucleoplasmic side of the inner nuclear membrane. Lamins provide a framework for the nuclear envelope, bridging the nuclear envelope and chromatin, thereby playing an important role in nuclear assembly, chromatin organization, nuclear membrane and telomere dynamics. Lamin A and C also regulate matrix stiffness by conferring nuclear mechanical properties. The structural integrity of the lamina is strictly controlled by the cell cycle, as seen by the disintegration and formation of the nuclear envelope in prophase and telophase, respectively. Lamin A and C are present in equal amounts in the lamina of mammals. Also invoved in DNA repair: recruited by DNA repair proteins XRCC4 and IFFO1 to the DNA double-strand breaks (DSBs) to prevent chromosome translocation by immobilizing broken DNA ends. Required for normal development of peripheral nervous system and skeletal muscle and for muscle satellite cell proliferation. Required for osteoblastogenesis and bone formation. Also prevents fat infiltration of muscle and bone marrow, helping to maintain the volume and strength of skeletal muscle and bone. Required for cardiac homeostasis. Prelamin-A/C can accelerate smooth muscle cell senescence. It acts to disrupt mitosis and induce DNA damage in vascular smooth muscle cells (VSMCs), leading to mitotic failure, genomic instability, and premature senescence. The sequence is that of Prelamin-A/C (LMNA) from Homo sapiens (Human).